A 127-amino-acid polypeptide reads, in one-letter code: Fluoride-specific ion channel FluC (127 aa).

Helical transmembrane passes span 4–24 (LLLA…MLSM), 35–55 (LGTL…FAWF), 71–91 (TGFC…VFLL), and 103–123 (VLVN…IFSA). Na(+) is bound by residues glycine 75 and threonine 78.

The protein belongs to the fluoride channel Fluc/FEX (TC 1.A.43) family.

It localises to the cell inner membrane. It catalyses the reaction fluoride(in) = fluoride(out). Its activity is regulated as follows. Na(+) is not transported, but it plays an essential structural role and its presence is essential for fluoride channel function. In terms of biological role, fluoride-specific ion channel. Important for reducing fluoride concentration in the cell, thus reducing its toxicity. The polypeptide is Fluoride-specific ion channel FluC (Escherichia fergusonii (strain ATCC 35469 / DSM 13698 / CCUG 18766 / IAM 14443 / JCM 21226 / LMG 7866 / NBRC 102419 / NCTC 12128 / CDC 0568-73)).